Consider the following 85-residue polypeptide: Colicin E3 immunity protein (85 aa).

The protein belongs to the cloacin immunity protein family. As to quaternary structure, native colicin E3 is a 1:1 complex of A chain and protein B (Im3). Binds between the translocation and cytotoxic RNase domains of intact ColE3, blocking access to the 16S rRNA substrate. Forms a very tight 1:1 complex with the cytotoxic fragment (residues 456-551) of ColE3 (ceaC).

In terms of biological role, the cognate immunity protein for colicin E3 (ColE3), protects cells which harbor the plasmid ColE3 against the toxic action of ColE3. This protein inhibits the 16S RNA hydrolyzing activity of ColE3 by binding with very high affinity to the C-terminal catalytic domain of ColE3. The sequence is that of Colicin E3 immunity protein from Escherichia coli.